Here is a 98-residue protein sequence, read N- to C-terminus: NADH-ubiquinone oxidoreductase chain 4L (98 aa).

3 helical membrane-spanning segments follow: residues 1–21, 30–50, and 61–81; these read MSMV…GLLI, LLCL…TILI, and IILL…LVMI.

The protein belongs to the complex I subunit 4L family. Core subunit of respiratory chain NADH dehydrogenase (Complex I) which is composed of 45 different subunits.

The protein resides in the mitochondrion inner membrane. The catalysed reaction is a ubiquinone + NADH + 5 H(+)(in) = a ubiquinol + NAD(+) + 4 H(+)(out). Core subunit of the mitochondrial membrane respiratory chain NADH dehydrogenase (Complex I) which catalyzes electron transfer from NADH through the respiratory chain, using ubiquinone as an electron acceptor. Part of the enzyme membrane arm which is embedded in the lipid bilayer and involved in proton translocation. This chain is NADH-ubiquinone oxidoreductase chain 4L (MT-ND4L), found in Neovison vison (American mink).